Reading from the N-terminus, the 552-residue chain is Transcription factor kayak (552 aa).

Disordered stretches follow at residues 110–145 (LAQG…TDST) and 177–234 (GAAS…KRRV). A compositionally biased stretch (polar residues) spans 111 to 127 (AQGSDSEDSNASYNDTQ). A compositionally biased stretch (low complexity) spans 135-145 (TDTSSAHTDST). Over residues 177–192 (GAASVGSSNANTSNTP) the composition is skewed to polar residues. Positions 212 to 275 (EQKRAVRRER…NQLEYCLAAH (64 aa)) constitute a bZIP domain. Residues 214–233 (KRAVRRERNKQAAARCRKRR) are basic motif. A leucine-zipper region spans residues 240 to 247 (LTEEVEQL). Residues 304 to 325 (AGSSGSGASSHHNHNSNDSSNG) show a composition bias toward low complexity. Disordered regions lie at residues 304-346 (AGSS…PLDL), 365-390 (LDGA…TLPP), and 514-552 (GGTG…LVSL). Residues 333 to 343 (TLNSTGRSNSP) are compositionally biased toward polar residues. Residue serine 342 is modified to Phosphoserine.

This sequence belongs to the bZIP family. Fos subfamily. Homodimer. Heterodimer with Jra. The kay-Jra heterodimer binds more stably to the AP-1 site than either of the two proteins alone.

The protein localises to the nucleus. In terms of biological role, developmentally regulated transcription factor AP-1 binds and recognizes the enhancer DNA sequence: 5'-TGA[CG]TCA-3'. May play a role in the function or determination of a particular subset of cells in the developing embryo. It is able to carry out its function either independently of or in conjunction with Jra. In Drosophila yakuba (Fruit fly), this protein is Transcription factor kayak.